The sequence spans 76 residues: Kappa-scoloptoxin(15)-Ssd3a (76 aa).

The first 23 residues, 1–23 (MEGKIIFICFLVVLLTLPELISS), serve as a signal peptide directing secretion.

Post-translationally, contains 2 disulfide bonds. As to expression, expressed by the venom gland.

The protein resides in the secreted. In terms of biological role, acts as a voltage-gated potassium channel inhibitor. This chain is Kappa-scoloptoxin(15)-Ssd3a, found in Scolopendra dehaani (Thai centipede).